Here is a 300-residue protein sequence, read N- to C-terminus: SNAP25 homologous protein SNAP33 (300 aa).

2 disordered regions span residues 1 to 76 (MFGL…QSLF) and 176 to 228 (WKPK…PESA). S29 carries the post-translational modification Phosphoserine. The span at 38–49 (TLNPSKRTTSEP) shows a compositional bias: polar residues. The segment covering 190-208 (TRDDSPTRRVNHLEKREKL) has biased composition (basic and acidic residues). The 63-residue stretch at 235 to 297 (EMEKAKQDDG…QQSNQRGRRL (63 aa)) folds into the t-SNARE coiled-coil homology domain.

The protein belongs to the SNAP-25 family. As to quaternary structure, interacts with the cytokinesis-specific syntaxin KNOLLE and with SYP121. Binds to EXO70B2. In terms of tissue distribution, ubiquitous, with a strong expression in root tips, ovules, very young leaves, vascular tissue, hydathodes, stipules and the abscission and dehiscence zones of the siliques.

Its subcellular location is the membrane. T-SNARE involved in diverse vesicle trafficking and membrane fusion processes, including cell plate formation. May function in the secretory pathway. The protein is SNAP25 homologous protein SNAP33 of Arabidopsis thaliana (Mouse-ear cress).